Here is a 50-residue protein sequence, read N- to C-terminus: Sperm protamine P1 (50 aa).

2 cysteine pairs are disulfide-bonded: cysteine 7–cysteine 15 and cysteine 38–cysteine 46.

Belongs to the protamine P1 family. Cross-linked by interchain disulfide bonds around the DNA-helix. Testis.

The protein resides in the nucleus. It localises to the chromosome. Functionally, protamines substitute for histones in the chromatin of sperm during the haploid phase of spermatogenesis. They compact sperm DNA into a highly condensed, stable and inactive complex. In Equus asinus (Donkey), this protein is Sperm protamine P1 (PRM1).